Here is a 208-residue protein sequence, read N- to C-terminus: Large ribosomal subunit protein bL25 (208 aa).

This sequence belongs to the bacterial ribosomal protein bL25 family. CTC subfamily. In terms of assembly, part of the 50S ribosomal subunit; part of the 5S rRNA/L5/L18/L25 subcomplex. Contacts the 5S rRNA. Binds to the 5S rRNA independently of L5 and L18.

This is one of the proteins that binds to the 5S RNA in the ribosome where it forms part of the central protuberance. This chain is Large ribosomal subunit protein bL25, found in Burkholderia thailandensis (strain ATCC 700388 / DSM 13276 / CCUG 48851 / CIP 106301 / E264).